Here is a 344-residue protein sequence, read N- to C-terminus: MRSQRIVHIVSCHAEGEVGDVIVGGVAAPPGATLWEQSRWIARDQDLRNFVLNEPRGGVFRHANLLVPAKDPRAQMGWIIMEPADTPPMSGSNSLCVATVLLDSGILPMREPLTRLLLEAPGGLIEARAECRDGKAERVEIRNVPSFADRLDAWIEVEGLGSLQVDTAYGGDSFVIADARRLGFALRADEAAELVATGLKITHAANEQLGFRHPTNPDWDHLSFCQLAAPPERRDGVLGANNAVVIRPGKIDRSPCGTGCSARMAVLQAKGQLRVGERFVGRSIIGSEFHCHIESLTELGGRPAILPCLSGRAWITGIHQYLLDPDDPWPQGYRLSDTWPGGHC.

The Proton acceptor role is filled by S90. Residues 91–92 (GS), D252, and 257–258 (GT) each bind substrate.

This sequence belongs to the proline racemase family.

It catalyses the reaction trans-3-hydroxy-L-proline = 1-pyrroline-2-carboxylate + H2O. The enzyme catalyses trans-3-hydroxy-L-proline = cis-3-hydroxy-D-proline. Bifunctional enzyme catalyzing both the dehydration of trans-3-hydroxy-L-proline (t3LHyp) to Delta(1)-pyrroline-2-carboxylate (Pyr2C) and 2-epimerization of t3LHyp to cis-3-hydroxy-D-proline (c3DHyp). No dehydratase activity with L-proline, trans-4-hydroxy-L-proline (t4LHyp), cis-4-hydroxy-L-proline (c4LHyp), D-proline, cis-4-hydroxy-D-proline (c4DHyp), trans-4-hydroxy-D-proline (t4DHyp) or L-serine as substrates. Displays neither t4LHyp epimerase nor proline racemase activity. Is likely involved in a degradation pathway that converts t3LHyp to L-proline, which would allow P.aeruginosa to grow on t3LHyp as a sole carbon source. This is Bifunctional trans-3-hydroxy-L-proline dehydratase/2-epimerase from Pseudomonas aeruginosa (strain ATCC 15692 / DSM 22644 / CIP 104116 / JCM 14847 / LMG 12228 / 1C / PRS 101 / PAO1).